Reading from the N-terminus, the 259-residue chain is NAP1-related protein 1 (259 aa).

Basic and acidic residues predominate over residues 1 to 15 (MAAAEQKGKKPRTDG). Residues 1–20 (MAAAEQKGKKPRTDGAEAEP) are disordered. A coiled-coil region spans residues 21 to 62 (VDAALLQSIEKLQEIQDEIEKVNEEACDKVLELEQKYNEVRR). The tract at residues 228–259 (ELLDDDDEVSDDDDEEEDDEDQGEGEEDGEEN) is disordered.

This sequence belongs to the nucleosome assembly protein (NAP) family.

It localises to the nucleus. The protein resides in the cytoplasm. Functionally, acts as a histone H2A/H2B chaperone in nucleosome assembly. The chain is NAP1-related protein 1 from Oryza sativa subsp. indica (Rice).